An 852-amino-acid polypeptide reads, in one-letter code: Glutamine--tRNA ligase (852 aa).

The interval 1-42 (MGAFGWEQDRGAPFSGRSPRILTRMTDAPRPTAGADAPARPP) is disordered. Residues 1-635 (MGAFGWEQDR…ITLKDTWGKQ (635 aa)) form a glutaminyl-tRNA synthetase region. A compositionally biased stretch (low complexity) spans 28–38 (APRPTAGADAP). The short motif at 74 to 84 (PDPSGYAHLGH) is the 'HIGH' region element. 2 residues coordinate L-glutamine: Asp107 and Tyr252. Residues 308-312 (ITSKR) carry the 'KMSKS' region motif. 2 disordered regions span residues 533 to 562 (EGEN…TAPV) and 632 to 681 (WGKQ…LTPE). Positions 636–852 (GGGTQQKAEG…LAAALKDALA (217 aa)) are gatB-like. A compositionally biased stretch (low complexity) spans 664–675 (SSSPAKAHAPKA).

This sequence in the N-terminal section; belongs to the class-I aminoacyl-tRNA synthetase family. The protein in the C-terminal section; belongs to the GatB/GatE family. Monomer.

The protein resides in the cytoplasm. It carries out the reaction tRNA(Gln) + L-glutamine + ATP = L-glutaminyl-tRNA(Gln) + AMP + diphosphate. This is Glutamine--tRNA ligase from Deinococcus radiodurans (strain ATCC 13939 / DSM 20539 / JCM 16871 / CCUG 27074 / LMG 4051 / NBRC 15346 / NCIMB 9279 / VKM B-1422 / R1).